The following is a 333-amino-acid chain: 4-hydroxyproline 2-epimerase (333 aa).

Cysteine 91 serves as the catalytic Proton acceptor. Substrate-binding positions include 92 to 93 (GH), histidine 225, and aspartate 250. Cysteine 254 functions as the Proton donor in the catalytic mechanism. 255–256 (GT) serves as a coordination point for substrate.

It belongs to the proline racemase family.

It carries out the reaction trans-4-hydroxy-L-proline = cis-4-hydroxy-D-proline. Its function is as follows. Catalyzes the epimerization of trans-4-hydroxy-L-proline (t4LHyp) to cis-4-hydroxy-D-proline (c4DHyp). Is likely involved in a degradation pathway that converts t4LHyp to alpha-ketoglutarate. Displays no proline racemase activity. The polypeptide is 4-hydroxyproline 2-epimerase (Streptosporangium roseum (strain ATCC 12428 / DSM 43021 / JCM 3005 / KCTC 9067 / NCIMB 10171 / NRRL 2505 / NI 9100)).